We begin with the raw amino-acid sequence, 622 residues long: MKRNGFKIGVTLALLLLCGYYLYPTVRYALLQRKLNRMSEEERAAFIEANYGTIQSLRERALKLGLDLQGGMHVTLEVRVDALIRELATDVDETFEEVLAAARERARSGDVSLIDAFVEEFERRDPNARLSRYFRNPDAGITRRSSNEEVAAYLRQQAEEAVNRAIEIIRDRVDRYGVTEPVIQKQGTRRIVVELPGVDDPERVRRLLRGTARLEFRLMADPQLLQAALQDIIAYYEPDTTAASETSAVTDTATADTSLAALLGEQPSPERPRNPLLAVMQPVGQGVVFGIVAGPDTAQVNRLLRNPEVQALLPSGIELLYTANPVGTDEQGRPLYYLLGVRKEVELTGEVITDARVEFDELNRPQVSMTMNSEGARIWARLTGANVGKHIAIVLDNVVYSYPVVNERIPSGRSSITGLDSREEAQDIVTVLKSGALPAPVDIIEERTVGPSLGEASIRAGLRSVLTGLLLVALFMIFYYRTGGMIADLALVLNIIFILGILAAFNATLTLPGIAGIVLTIGMAVDANVLIFERIREEQATGKTLRAAIDLGYSKAFSAIFDANITTFFTAAILYSFGVGPIQGFAVTLMAGIAASLFSAIVITRIIFDYLVLERKLMVSVG.

6 helical membrane passes run phenylalanine 6–valine 26, alanine 460–tyrosine 480, methionine 485–phenylalanine 505, proline 512–phenylalanine 532, alanine 559–valine 579, and glycine 584–threonine 604.

It belongs to the SecD/SecF family. SecD subfamily. In terms of assembly, forms a complex with SecF. Part of the essential Sec protein translocation apparatus which comprises SecA, SecYEG and auxiliary proteins SecDF. Other proteins may also be involved.

It is found in the cell inner membrane. Functionally, part of the Sec protein translocase complex. Interacts with the SecYEG preprotein conducting channel. SecDF uses the proton motive force (PMF) to complete protein translocation after the ATP-dependent function of SecA. In Rhodothermus marinus (strain ATCC 43812 / DSM 4252 / R-10) (Rhodothermus obamensis), this protein is Protein translocase subunit SecD.